A 324-amino-acid polypeptide reads, in one-letter code: Glyoxylate/hydroxypyruvate reductase B (324 aa).

Catalysis depends on residues Arg237 and Glu266. The Proton donor role is filled by His285.

It belongs to the D-isomer specific 2-hydroxyacid dehydrogenase family. GhrB subfamily. In terms of assembly, homodimer.

It localises to the cytoplasm. The catalysed reaction is glycolate + NADP(+) = glyoxylate + NADPH + H(+). It carries out the reaction (R)-glycerate + NAD(+) = 3-hydroxypyruvate + NADH + H(+). The enzyme catalyses (R)-glycerate + NADP(+) = 3-hydroxypyruvate + NADPH + H(+). Catalyzes the NADPH-dependent reduction of glyoxylate and hydroxypyruvate into glycolate and glycerate, respectively. This is Glyoxylate/hydroxypyruvate reductase B from Shigella boydii serotype 4 (strain Sb227).